Consider the following 288-residue polypeptide: MAGAKEIRNKIGSVKSTQKITKAMEMVAASKMRRSQDAMEASRPYAETMRKVIGHVANANLEYRHPYLEEREAKRVGYIIVSTDRGLCGGLNINVFKKAVTDIQTWKEKGAEIELAVIGSKATAFFKHGGAKVAAQVSGLGDSPSLEDLIGSVGVMLKKYDEGELDRLYVVFNKFVNTMVQQPTIDQLLPLPKSDSKEMQREHSWDYIYEPEPKPLLDTLLVRYVESQVYQGVVENLACEQAARMIAMKAATDNATNLIEDLELVYNKARQAAITQELSEIVGGASAV.

It belongs to the ATPase gamma chain family. As to quaternary structure, F-type ATPases have 2 components, CF(1) - the catalytic core - and CF(0) - the membrane proton channel. CF(1) has five subunits: alpha(3), beta(3), gamma(1), delta(1), epsilon(1). CF(0) has three main subunits: a, b and c.

The protein resides in the cell inner membrane. Produces ATP from ADP in the presence of a proton gradient across the membrane. The gamma chain is believed to be important in regulating ATPase activity and the flow of protons through the CF(0) complex. The chain is ATP synthase gamma chain from Vibrio parahaemolyticus serotype O3:K6 (strain RIMD 2210633).